Reading from the N-terminus, the 682-residue chain is Connectin (682 aa).

An N-terminal signal peptide occupies residues Met1–Val24. Residues Gly29–Ser54 form a disordered region. Over residues Arg40–Ser54 the composition is skewed to low complexity. LRR repeat units lie at residues Leu149–Pro172, Leu173–Asn196, Phe199–Asn220, Arg223–Asn244, Leu247–Asp268, Arg271–Gly292, Asn295–Glu316, Ser319–Asn342, Thr343–Gly364, Ala367–Pro388, and Ile389–Asp404. In terms of domain architecture, LRRCT spans Asn405–Gly462. The segment at Arg503–Glu536 is disordered. Residue Ala658 is the site of GPI-anchor amidated alanine attachment. The propeptide at Gly659–Gly682 is removed in mature form.

Predominantly expressed in abdominal and thoracic segment muscle and motorneuron cells.

It is found in the cell membrane. Its function is as follows. Cell adhesion protein involved in target recognition during neuromuscular development. Mediates homophilic cellular adhesion. The polypeptide is Connectin (Con) (Drosophila melanogaster (Fruit fly)).